The primary structure comprises 983 residues: Kinesin-like protein KIN-14I (983 aa).

In terms of domain architecture, Calponin-homology (CH) spans 44–166; it reads ASRRYEAANW…CVLAIKSYDE (123 aa). Polar residues-rich tracts occupy residues 203–214 and 278–287; these read SLSRTSSINNEK and ESTSSQNNRS. Disordered stretches follow at residues 203–227 and 276–295; these read SLSR…LSSP and PRES…LGER. The Kinesin motor domain occupies 399-724; the sequence is SIRVYCRVRP…LKFAERVATV (326 aa). 481-488 is a binding site for ATP; the sequence is GQTGSGKT. Residues 731 to 758 adopt a coiled-coil conformation; it reads VNNDTSDVKELKEQIATLKAALARKEAE. Disordered stretches follow at residues 802–824 and 921–983; these read TVNS…DDRS and TRSN…NARH. The span at 939-951 shows a compositional bias: polar residues; it reads SPQSRNNSNNTVS.

This sequence belongs to the TRAFAC class myosin-kinesin ATPase superfamily. Kinesin family. KIN-14 subfamily.

The polypeptide is Kinesin-like protein KIN-14I (Arabidopsis thaliana (Mouse-ear cress)).